Here is a 360-residue protein sequence, read N- to C-terminus: Photosystem II protein D1 (360 aa).

The next 3 helical transmembrane spans lie at 30 to 47 (YVGW…AAAA), 119 to 134 (HFLI…QWEL), and 143 to 157 (WICV…AAFA). Histidine 119 serves as a coordination point for chlorophyll a. Residue tyrosine 127 participates in pheophytin a binding. Aspartate 171 and glutamate 190 together coordinate [CaMn4O5] cluster. Residues 198–219 (FHMAGVAGMFGGSLFSAMHGSL) traverse the membrane as a helical segment. Histidine 199 lines the chlorophyll a pocket. A quinone contacts are provided by residues histidine 216 and 265–266 (SF). Histidine 216 contacts Fe cation. Histidine 273 lines the Fe cation pocket. A helical membrane pass occupies residues 275–289 (FLAVFPVVCVWLTSM). [CaMn4O5] cluster contacts are provided by histidine 333, glutamate 334, aspartate 343, and alanine 345. Residues 346–360 (AAESTTVALSAPAIG) constitute a propeptide that is removed on maturation.

The protein belongs to the reaction center PufL/M/PsbA/D family. PSII is composed of 1 copy each of membrane proteins PsbA, PsbB, PsbC, PsbD, PsbE, PsbF, PsbH, PsbI, PsbJ, PsbK, PsbL, PsbM, PsbT, PsbX, PsbY, Psb30/Ycf12, peripheral proteins PsbO, CyanoQ (PsbQ), PsbU, PsbV and a large number of cofactors. It forms dimeric complexes. The D1/D2 heterodimer binds P680, chlorophylls that are the primary electron donor of PSII, and subsequent electron acceptors. It shares a non-heme iron and each subunit binds pheophytin, quinone, additional chlorophylls, carotenoids and lipids. D1 provides most of the ligands for the Mn4-Ca-O5 cluster of the oxygen-evolving complex (OEC). There is also a Cl(-1) ion associated with D1 and D2, which is required for oxygen evolution. The PSII complex binds additional chlorophylls, carotenoids and specific lipids. is required as a cofactor. Tyr-162 forms a radical intermediate that is referred to as redox-active TyrZ, YZ or Y-Z. Post-translationally, C-terminally processed by CtpA; processing is essential to allow assembly of the oxygen-evolving complex and thus photosynthetic growth.

Its subcellular location is the cellular thylakoid membrane. The enzyme catalyses 2 a plastoquinone + 4 hnu + 2 H2O = 2 a plastoquinol + O2. Its function is as follows. Photosystem II (PSII) is a light-driven water:plastoquinone oxidoreductase that uses light energy to abstract electrons from H(2)O, generating O(2) and a proton gradient subsequently used for ATP formation. It consists of a core antenna complex that captures photons, and an electron transfer chain that converts photonic excitation into a charge separation. The D1/D2 (PsbA/PsbD) reaction center heterodimer binds P680, the primary electron donor of PSII as well as several subsequent electron acceptors. The protein is Photosystem II protein D1 of Prochlorococcus marinus (strain MIT 9312).